A 77-amino-acid polypeptide reads, in one-letter code: Serine protease inhibitor 1 (77 aa).

Residues 1–17 (MMFTPLIVLTLLVLATA) form the signal peptide. 5 cysteine pairs are disulfide-bonded: Cys-21–Cys-53, Cys-30–Cys-48, Cys-33–Cys-44, Cys-37–Cys-74, and Cys-55–Cys-68. Residues 21–74 (CGPNEQWSDCPGCELQCGESDKPCPAMCGDPKCYCSPDQYRRIPDGRCIRKIQC) enclose the TIL domain.

Its subcellular location is the secreted. In terms of biological role, defends the organism against the host's proteinases. In Anisakis simplex (Herring worm), this protein is Serine protease inhibitor 1.